Consider the following 380-residue polypeptide: 5-amino-6-(D-ribitylamino)uracil--L-tyrosine 4-hydroxyphenyl transferase (380 aa).

Positions valine 56 to asparagine 303 constitute a Radical SAM core domain. Positions 70, 74, and 77 each coordinate [4Fe-4S] cluster.

It belongs to the radical SAM superfamily. CofH family. Consists of two subunits, CofG and CofH. It depends on [4Fe-4S] cluster as a cofactor.

It carries out the reaction 5-amino-6-(D-ribitylamino)uracil + L-tyrosine + S-adenosyl-L-methionine = 5-amino-5-(4-hydroxybenzyl)-6-(D-ribitylimino)-5,6-dihydrouracil + 2-iminoacetate + 5'-deoxyadenosine + L-methionine + H(+). The protein operates within cofactor biosynthesis; coenzyme F0 biosynthesis. Catalyzes the radical-mediated synthesis of 5-amino-5-(4-hydroxybenzyl)-6-(D-ribitylimino)-5,6-dihydrouracil from 5-amino-6-(D-ribitylamino)uracil and L-tyrosine. The chain is 5-amino-6-(D-ribitylamino)uracil--L-tyrosine 4-hydroxyphenyl transferase from Nostoc punctiforme (strain ATCC 29133 / PCC 73102).